Reading from the N-terminus, the 307-residue chain is Small ribosomal subunit biogenesis GTPase RsgA (307 aa).

Residues 1-20 form a disordered region; that stretch reads MPSEHPFSDGISTPNPKETM. The span at 10–20 shows a compositional bias: polar residues; sequence GISTPNPKETM. One can recognise a CP-type G domain in the interval 85-242; it reads RQDAWKTKLI…LIDSPGLQEF (158 aa). Residues 135 to 138 and 184 to 192 contribute to the GTP site; these read NKAD and GQSGMGKST. 4 residues coordinate Zn(2+): Cys-266, Cys-271, His-273, and Cys-279.

This sequence belongs to the TRAFAC class YlqF/YawG GTPase family. RsgA subfamily. As to quaternary structure, monomer. Associates with 30S ribosomal subunit, binds 16S rRNA. Zn(2+) is required as a cofactor.

The protein localises to the cytoplasm. In terms of biological role, one of several proteins that assist in the late maturation steps of the functional core of the 30S ribosomal subunit. Helps release RbfA from mature subunits. May play a role in the assembly of ribosomal proteins into the subunit. Circularly permuted GTPase that catalyzes slow GTP hydrolysis, GTPase activity is stimulated by the 30S ribosomal subunit. The chain is Small ribosomal subunit biogenesis GTPase RsgA from Neisseria meningitidis serogroup A / serotype 4A (strain DSM 15465 / Z2491).